We begin with the raw amino-acid sequence, 94 residues long: Small ribosomal subunit protein bS20 (94 aa).

The protein belongs to the bacterial ribosomal protein bS20 family.

In terms of biological role, binds directly to 16S ribosomal RNA. This Aquifex aeolicus (strain VF5) protein is Small ribosomal subunit protein bS20.